Consider the following 394-residue polypeptide: Chorismate synthase (394 aa).

Residues arginine 40 and arginine 46 each contribute to the NADP(+) site. Residues 135-137 (RAS), 255-256 (QA), glycine 302, 317-321 (KPISS), and arginine 343 contribute to the FMN site.

Belongs to the chorismate synthase family. In terms of assembly, homotetramer. Requires FMNH2 as cofactor.

The catalysed reaction is 5-O-(1-carboxyvinyl)-3-phosphoshikimate = chorismate + phosphate. The protein operates within metabolic intermediate biosynthesis; chorismate biosynthesis; chorismate from D-erythrose 4-phosphate and phosphoenolpyruvate: step 7/7. Its function is as follows. Catalyzes the anti-1,4-elimination of the C-3 phosphate and the C-6 proR hydrogen from 5-enolpyruvylshikimate-3-phosphate (EPSP) to yield chorismate, which is the branch point compound that serves as the starting substrate for the three terminal pathways of aromatic amino acid biosynthesis. This reaction introduces a second double bond into the aromatic ring system. In Parafrankia sp. (strain EAN1pec), this protein is Chorismate synthase.